Consider the following 120-residue polypeptide: Ribosome-binding factor A (120 aa).

It belongs to the RbfA family. In terms of assembly, monomer. Binds 30S ribosomal subunits, but not 50S ribosomal subunits or 70S ribosomes.

The protein resides in the cytoplasm. Its function is as follows. One of several proteins that assist in the late maturation steps of the functional core of the 30S ribosomal subunit. Associates with free 30S ribosomal subunits (but not with 30S subunits that are part of 70S ribosomes or polysomes). Required for efficient processing of 16S rRNA. May interact with the 5'-terminal helix region of 16S rRNA. This chain is Ribosome-binding factor A, found in Rickettsia africae (strain ESF-5).